The sequence spans 155 residues: Fibroblast growth factor 2 (155 aa).

Positions 1-9 (MAAGSITTL) are excised as a propeptide. The tract at residues 1–20 (MAAGSITTLPALPEDGGSGA) is disordered. Heparin is bound at residue N36. The short motif at 46–48 (DGR) is the Cell attachment site; atypical element. A Phosphotyrosine; by TEC modification is found at Y82. Residues 88–90 (DGR) carry the Cell attachment site; atypical motif. A Glycyl lysine isopeptide (Lys-Gly) (interchain with G-Cter in SUMO1) cross-link involves residue K95. A heparin-binding region spans residues 128–144 (KRTGQYKLGPKTGPGQK).

It belongs to the heparin-binding growth factors family. As to quaternary structure, monomer. Homodimer. Interacts with FGFR1, FGFR2, FGFR3 and FGFR4. Affinity between fibroblast growth factors (FGFs) and their receptors is increased by heparan sulfate glycosaminoglycans that function as coreceptors. Interacts with CSPG4, FGFBP1 and TEC. Found in a complex with FGFBP1, FGF1 and FGF2. Interacts with FGFBP3. Interacts with integrin ITGAV:ITGB3; the interaction is required for FGF2 signaling. Interacts with SNORC (via the extracellular domain). Interacts with glypican GPC3. In terms of processing, phosphorylation at Tyr-82 regulates FGF2 unconventional secretion.

The protein resides in the secreted. It is found in the nucleus. Its function is as follows. Acts as a ligand for FGFR1, FGFR2, FGFR3 and FGFR4. Also acts as an integrin ligand which is required for FGF2 signaling. Binds to integrin ITGAV:ITGB3. Plays an important role in the regulation of cell survival, cell division, cell differentiation and cell migration. Functions as a potent mitogen in vitro. Can induce angiogenesis. Mediates phosphorylation of ERK1/2 and thereby promotes retinal lens fiber differentiation. This is Fibroblast growth factor 2 (FGF2) from Bos taurus (Bovine).